We begin with the raw amino-acid sequence, 336 residues long: MALKHFLNTQDWTCSELNALLTQARAFKHNKLGNALKGKSIALVFFNPSMRTRSSFELGAFQLGGHAIVLQPGKDAWPIEFDTGTVMEAETEEHICEVARVLGHYVDLIGVRAFPKFLDWTYDRQDIVLNSFAKYSPVPVINMETITHPCQELAHIMALQEHFGTTDLRGKKYVLTWTYHPKPLNTAVANSALTIATRLGMDVTLLCPTPDYVLDERYIDWARQNIADTGSTFQVSHDIDNAYRGADVIYAKSWGALPFFGNWAMEKPIRDQYRHFIVDEAKMALTNNAVFSHCLPLRRNVKATDAVMDGSNCIAIHEAGNRLHVQKAIMAALASQ.

Carbamoyl phosphate contacts are provided by residues 49–52 (SMRT), Trp77, and Arg112. Glu144 is a binding site for N(2)-acetyl-L-ornithine. Residue 148–151 (HPCQ) participates in carbamoyl phosphate binding. The N(2)-acetyl-L-ornithine site is built by Lys252 and Leu295. 294–295 (CL) provides a ligand contact to carbamoyl phosphate. Position 302 is an N6-carboxylysine (Lys302). Arg322 contacts carbamoyl phosphate.

It belongs to the aspartate/ornithine carbamoyltransferase superfamily. AOTCase family. In terms of assembly, homotrimer.

Its subcellular location is the cytoplasm. The enzyme catalyses N(2)-acetyl-L-ornithine + carbamoyl phosphate = N(2)-acetyl-L-citrulline + phosphate + H(+). The protein operates within amino-acid biosynthesis; L-arginine biosynthesis. Carboxylation at Lys-302 increases the catalytic activity of the enzyme. Functionally, catalyzes the transfer of the carbamoyl group from carbamoyl phosphate to the delta-amino group of N(2)-acetyl-L-ornithine to produce N(2)-acetyl-L-citrulline. This is a step in an alternative arginine biosynthesis pathway. The enzyme has no activity with ornithine. The chain is N-acetylornithine carbamoyltransferase from Xylella fastidiosa (strain Temecula1 / ATCC 700964).